A 316-amino-acid polypeptide reads, in one-letter code: Ribosomal protein L11 methyltransferase (316 aa).

4 residues coordinate S-adenosyl-L-methionine: Thr160, Gly181, Asp203, and Asn246.

It belongs to the methyltransferase superfamily. PrmA family.

The protein localises to the cytoplasm. It catalyses the reaction L-lysyl-[protein] + 3 S-adenosyl-L-methionine = N(6),N(6),N(6)-trimethyl-L-lysyl-[protein] + 3 S-adenosyl-L-homocysteine + 3 H(+). Functionally, methylates ribosomal protein L11. This chain is Ribosomal protein L11 methyltransferase, found in Heliobacterium modesticaldum (strain ATCC 51547 / Ice1).